The sequence spans 255 residues: tRNA (guanine-N(1)-)-methyltransferase (255 aa).

Residues Gly117 and 137–142 contribute to the S-adenosyl-L-methionine site; that span reads LGDFVL.

It belongs to the RNA methyltransferase TrmD family. In terms of assembly, homodimer.

The protein resides in the cytoplasm. It carries out the reaction guanosine(37) in tRNA + S-adenosyl-L-methionine = N(1)-methylguanosine(37) in tRNA + S-adenosyl-L-homocysteine + H(+). Its function is as follows. Specifically methylates guanosine-37 in various tRNAs. This is tRNA (guanine-N(1)-)-methyltransferase from Paraburkholderia xenovorans (strain LB400).